A 282-amino-acid polypeptide reads, in one-letter code: Putative SWIB domain-containing protein 070L (282 aa).

A compositionally biased stretch (low complexity) spans 1–16 (MFQTTPKQVKPTTVPK). Residues 1–21 (MFQTTPKQVKPTTVPKTGRKN) form a disordered region. One can recognise an SWIB/MDM2 domain in the interval 97 to 181 (GLEKPRMISE…QKYLKHCFDE (85 aa)). The tract at residues 199-282 (TDDQTTAEEA…KVKKEHKIKK (84 aa)) is disordered. Residues 262 to 275 (GKKDKENIPLEKVK) show a composition bias toward basic and acidic residues.

This sequence belongs to the IIV-6 306R family.

The polypeptide is Putative SWIB domain-containing protein 070L (Invertebrate iridescent virus 3 (IIV-3)).